Here is a 206-residue protein sequence, read N- to C-terminus: Large ribosomal subunit protein bL17 (206 aa).

A compositionally biased stretch (basic and acidic residues) spans 130–141; sequence ERARGTRFEARR. Positions 130–206 are disordered; sequence ERARGTRFEA…SGAGEQNSAN (77 aa). Composition is skewed to low complexity over residues 160-181 and 189-200; these read TAAA…GAAG and DDSGIGDDSGAG.

This sequence belongs to the bacterial ribosomal protein bL17 family. As to quaternary structure, part of the 50S ribosomal subunit. Contacts protein L32.

This is Large ribosomal subunit protein bL17 from Frankia casuarinae (strain DSM 45818 / CECT 9043 / HFP020203 / CcI3).